Consider the following 410-residue polypeptide: Translation initiation factor 2 subunit gamma (410 aa).

A tr-type G domain is found at 9-202 (QAEVNIGMVG…AIEEFIPTPK (194 aa)). A G1 region spans residues 18–25 (GHVDHGKT). Positions 21, 25, 46, and 48 each coordinate Mg(2+). A GTP-binding site is contributed by 21 to 26 (DHGKTT). Residues 46-50 (GITIK) form a G2 region. Residues Cys61, Cys64, Cys73, and Cys76 each coordinate Zn(2+). Positions 90-93 (DAPG) are G3. GTP contacts are provided by residues 145–148 (NKIE) and 180–182 (SAL). A G4 region spans residues 145–148 (NKIE). The tract at residues 180–182 (SAL) is G5.

The protein belongs to the TRAFAC class translation factor GTPase superfamily. Classic translation factor GTPase family. EIF2G subfamily. Heterotrimer composed of an alpha, a beta and a gamma chain. Requires Mg(2+) as cofactor.

It catalyses the reaction GTP + H2O = GDP + phosphate + H(+). Functionally, eIF-2 functions in the early steps of protein synthesis by forming a ternary complex with GTP and initiator tRNA. This chain is Translation initiation factor 2 subunit gamma, found in Thermococcus kodakarensis (strain ATCC BAA-918 / JCM 12380 / KOD1) (Pyrococcus kodakaraensis (strain KOD1)).